The primary structure comprises 330 residues: Lipoyl synthase (330 aa).

C77, C82, C88, C103, C107, C110, and S317 together coordinate [4Fe-4S] cluster. Residues 89 to 306 (FNHGTATFMI…RSEAERMGFE (218 aa)) enclose the Radical SAM core domain.

It belongs to the radical SAM superfamily. Lipoyl synthase family. Requires [4Fe-4S] cluster as cofactor.

Its subcellular location is the cytoplasm. The enzyme catalyses [[Fe-S] cluster scaffold protein carrying a second [4Fe-4S](2+) cluster] + N(6)-octanoyl-L-lysyl-[protein] + 2 oxidized [2Fe-2S]-[ferredoxin] + 2 S-adenosyl-L-methionine + 4 H(+) = [[Fe-S] cluster scaffold protein] + N(6)-[(R)-dihydrolipoyl]-L-lysyl-[protein] + 4 Fe(3+) + 2 hydrogen sulfide + 2 5'-deoxyadenosine + 2 L-methionine + 2 reduced [2Fe-2S]-[ferredoxin]. Its pathway is protein modification; protein lipoylation via endogenous pathway; protein N(6)-(lipoyl)lysine from octanoyl-[acyl-carrier-protein]: step 2/2. Functionally, catalyzes the radical-mediated insertion of two sulfur atoms into the C-6 and C-8 positions of the octanoyl moiety bound to the lipoyl domains of lipoate-dependent enzymes, thereby converting the octanoylated domains into lipoylated derivatives. This is Lipoyl synthase from Actinobacillus pleuropneumoniae serotype 3 (strain JL03).